A 136-amino-acid chain; its full sequence is Small ribosomal subunit protein uS9 (136 aa).

The protein belongs to the universal ribosomal protein uS9 family.

In Synechococcus sp. (strain JA-2-3B'a(2-13)) (Cyanobacteria bacterium Yellowstone B-Prime), this protein is Small ribosomal subunit protein uS9.